The primary structure comprises 313 residues: LOB domain-containing protein 36 (313 aa).

In terms of domain architecture, LOB spans 6-107 (SPCAACKFLR…HDLENAKKEL (102 aa)). Positions 245–313 (GNFVDSPSTN…SEEGRRNVIG (69 aa)) are disordered. Residues 249 to 260 (DSPSTNNNYHTD) show a composition bias toward polar residues. Low complexity predominate over residues 280–302 (PSQSSQPLPLQTQETQTQTQPNS).

This sequence belongs to the LOB domain-containing protein family. As to expression, expressed in trichomes, at the base of many lateral organs, including branching points of the inflorescence and floral organs and in the distal part of the pistil at stages when style and stigma start to develop. Also detected in pedicels and at the base of petals and sepals.

Controls the proximal-distal patterning in petals and the adaxial-abaxial determination of leaves. Involved in the repression of the homeobox gene BP. The protein is LOB domain-containing protein 36 (LBD36) of Arabidopsis thaliana (Mouse-ear cress).